Here is a 116-residue protein sequence, read N- to C-terminus: Protein Rev (116 aa).

Phosphoserine; by host CK2 is present on residues serine 5 and serine 8. The homomultimerization stretch occupies residues 18-26; sequence LIKVLYQSN. The interval 23 to 48 is disordered; that stretch reads YQSNPPPSSEGTRQARRNRRRRWRER. A Nuclear localization signal and RNA-binding (RRE) motif is present at residues 34–50; sequence TRQARRNRRRRWRERQR. A compositionally biased stretch (basic residues) spans 36 to 47; the sequence is QARRNRRRRWRE. The short motif at 73–84 is the Nuclear export signal and binding to XPO1 element; it reads FQLPPLERLTLD. The disordered stretch occupies residues 90-116; it reads GTSGTQGVGSPQILVESPPVLDSGTKE. Phosphoserine; by host occurs at positions 92 and 99.

It belongs to the HIV-1 REV protein family. In terms of assembly, homomultimer; when bound to the RRE. Multimeric assembly is essential for activity and may involve XPO1. Binds to human KPNB1, XPO1, TNPO1, RANBP5 and IPO7. Interacts with the viral Integrase. Interacts with human KHDRBS1. Interacts with human NAP1; this interaction decreases Rev multimerization and stimulates its activity. Interacts with human DEAD-box helicases DDX3 and DDX24; these interactions may serve for viral RNA export to the cytoplasm and packaging, respectively. Interacts with human PSIP1; this interaction may inhibit HIV-1 DNA integration by promoting dissociation of the Integrase-LEDGF/p75 complex. In terms of processing, asymmetrically arginine dimethylated at one site by host PRMT6. Methylation impairs the RNA-binding activity and export of viral RNA from the nucleus to the cytoplasm. Post-translationally, phosphorylated by protein kinase CK2. Presence of, and maybe binding to the N-terminus of the regulatory beta subunit of CK2 is necessary for CK2-mediated Rev's phosphorylation.

It is found in the host nucleus. Its subcellular location is the host nucleolus. It localises to the host cytoplasm. Functionally, escorts unspliced or incompletely spliced viral pre-mRNAs (late transcripts) out of the nucleus of infected cells. These pre-mRNAs carry a recognition sequence called Rev responsive element (RRE) located in the env gene, that is not present in fully spliced viral mRNAs (early transcripts). This function is essential since most viral proteins are translated from unspliced or partially spliced pre-mRNAs which cannot exit the nucleus by the pathway used by fully processed cellular mRNAs. Rev itself is translated from a fully spliced mRNA that readily exits the nucleus. Rev's nuclear localization signal (NLS) binds directly to KPNB1/Importin beta-1 without previous binding to KPNA1/Importin alpha-1. KPNB1 binds to the GDP bound form of RAN (Ran-GDP) and targets Rev to the nucleus. In the nucleus, the conversion from Ran-GDP to Ran-GTP dissociates Rev from KPNB1 and allows Rev's binding to the RRE in viral pre-mRNAs. Rev multimerization on the RRE via cooperative assembly exposes its nuclear export signal (NES) to the surface. Rev can then form a complex with XPO1/CRM1 and Ran-GTP, leading to nuclear export of the complex. Conversion from Ran-GTP to Ran-GDP mediates dissociation of the Rev/RRE/XPO1/RAN complex, so that Rev can return to the nucleus for a subsequent round of export. Beside KPNB1, also seems to interact with TNPO1/Transportin-1, RANBP5/IPO5 and IPO7/RANBP7 for nuclear import. The nucleoporin-like HRB/RIP is an essential cofactor that probably indirectly interacts with Rev to release HIV RNAs from the perinuclear region to the cytoplasm. This is Protein Rev from Human immunodeficiency virus type 1 group M subtype B (isolate YU-2) (HIV-1).